The sequence spans 205 residues: Small ribosomal subunit protein uS4 (205 aa).

Residues 94 to 157 (SRLDAVVYRA…RNLALVLEAL (64 aa)) form the S4 RNA-binding domain.

This sequence belongs to the universal ribosomal protein uS4 family. Part of the 30S ribosomal subunit. Contacts protein S5. The interaction surface between S4 and S5 is involved in control of translational fidelity.

In terms of biological role, one of the primary rRNA binding proteins, it binds directly to 16S rRNA where it nucleates assembly of the body of the 30S subunit. With S5 and S12 plays an important role in translational accuracy. This is Small ribosomal subunit protein uS4 from Hyphomonas neptunium (strain ATCC 15444).